A 688-amino-acid polypeptide reads, in one-letter code: UvrABC system protein B (688 aa).

The 158-residue stretch at 31 to 188 folds into the Helicase ATP-binding domain; that stretch reads GRVNAGEPDV…RKFVSMQYQR (158 aa). ATP is bound at residue 44-51; that stretch reads GATGTGKS. The Beta-hairpin signature appears at 97-120; it reads YYDYYQPEAYVPQTDTFIEKDSSV. Positions 434–587 constitute a Helicase C-terminal domain; sequence QIDDLLEQIR…QVAYNTEHGI (154 aa). The disordered stretch occupies residues 607–632; that stretch reads GEDTKKMLEGRGGGKRSPTPNLRREG. The region spanning 642-677 is the UVR domain; it reads ETIISDLNDQMLQAAGELKFELAARLRDELGDLKRE.

This sequence belongs to the UvrB family. Forms a heterotetramer with UvrA during the search for lesions. Interacts with UvrC in an incision complex.

Its subcellular location is the cytoplasm. In terms of biological role, the UvrABC repair system catalyzes the recognition and processing of DNA lesions. A damage recognition complex composed of 2 UvrA and 2 UvrB subunits scans DNA for abnormalities. Upon binding of the UvrA(2)B(2) complex to a putative damaged site, the DNA wraps around one UvrB monomer. DNA wrap is dependent on ATP binding by UvrB and probably causes local melting of the DNA helix, facilitating insertion of UvrB beta-hairpin between the DNA strands. Then UvrB probes one DNA strand for the presence of a lesion. If a lesion is found the UvrA subunits dissociate and the UvrB-DNA preincision complex is formed. This complex is subsequently bound by UvrC and the second UvrB is released. If no lesion is found, the DNA wraps around the other UvrB subunit that will check the other stand for damage. In Clavibacter sepedonicus (Clavibacter michiganensis subsp. sepedonicus), this protein is UvrABC system protein B.